Here is a 354-residue protein sequence, read N- to C-terminus: 4-hydroxy-3-methylbut-2-en-1-yl diphosphate synthase (flavodoxin) (354 aa).

[4Fe-4S] cluster-binding residues include Cys262, Cys265, Cys297, and Glu304.

It belongs to the IspG family. [4Fe-4S] cluster is required as a cofactor.

The enzyme catalyses (2E)-4-hydroxy-3-methylbut-2-enyl diphosphate + oxidized [flavodoxin] + H2O + 2 H(+) = 2-C-methyl-D-erythritol 2,4-cyclic diphosphate + reduced [flavodoxin]. The protein operates within isoprenoid biosynthesis; isopentenyl diphosphate biosynthesis via DXP pathway; isopentenyl diphosphate from 1-deoxy-D-xylulose 5-phosphate: step 5/6. Converts 2C-methyl-D-erythritol 2,4-cyclodiphosphate (ME-2,4cPP) into 1-hydroxy-2-methyl-2-(E)-butenyl 4-diphosphate. The sequence is that of 4-hydroxy-3-methylbut-2-en-1-yl diphosphate synthase (flavodoxin) from Helicobacter hepaticus (strain ATCC 51449 / 3B1).